We begin with the raw amino-acid sequence, 162 residues long: NADH-quinone oxidoreductase subunit I (162 aa).

4Fe-4S ferredoxin-type domains follow at residues L53–E83 and T93–N122. The [4Fe-4S] cluster site is built by C63, C66, C69, C73, C102, C105, C108, and C112.

It belongs to the complex I 23 kDa subunit family. NDH-1 is composed of 14 different subunits. Subunits NuoA, H, J, K, L, M, N constitute the membrane sector of the complex. Requires [4Fe-4S] cluster as cofactor.

Its subcellular location is the cell inner membrane. It carries out the reaction a quinone + NADH + 5 H(+)(in) = a quinol + NAD(+) + 4 H(+)(out). In terms of biological role, NDH-1 shuttles electrons from NADH, via FMN and iron-sulfur (Fe-S) centers, to quinones in the respiratory chain. The immediate electron acceptor for the enzyme in this species is believed to be ubiquinone. Couples the redox reaction to proton translocation (for every two electrons transferred, four hydrogen ions are translocated across the cytoplasmic membrane), and thus conserves the redox energy in a proton gradient. This is NADH-quinone oxidoreductase subunit I from Maricaulis maris (strain MCS10) (Caulobacter maris).